We begin with the raw amino-acid sequence, 142 residues long: Large ribosomal subunit protein uL11 (142 aa).

The protein belongs to the universal ribosomal protein uL11 family. Part of the ribosomal stalk of the 50S ribosomal subunit. Interacts with L10 and the large rRNA to form the base of the stalk. L10 forms an elongated spine to which L12 dimers bind in a sequential fashion forming a multimeric L10(L12)X complex. One or more lysine residues are methylated.

Forms part of the ribosomal stalk which helps the ribosome interact with GTP-bound translation factors. This Hydrogenovibrio crunogenus (strain DSM 25203 / XCL-2) (Thiomicrospira crunogena) protein is Large ribosomal subunit protein uL11.